The following is a 95-amino-acid chain: Large ribosomal subunit protein eL31 (95 aa).

The protein belongs to the eukaryotic ribosomal protein eL31 family. Part of the 50S ribosomal subunit.

The chain is Large ribosomal subunit protein eL31 from Pyrococcus furiosus (strain ATCC 43587 / DSM 3638 / JCM 8422 / Vc1).